Consider the following 813-residue polypeptide: LPS-assembly protein LptD (813 aa).

The N-terminal stretch at 1 to 22 (MRRALRLLPLPLSIAICLPAMA) is a signal peptide.

The protein belongs to the LptD family. As to quaternary structure, component of the lipopolysaccharide transport and assembly complex. Interacts with LptE and LptA.

Its subcellular location is the cell outer membrane. Together with LptE, is involved in the assembly of lipopolysaccharide (LPS) at the surface of the outer membrane. This chain is LPS-assembly protein LptD, found in Xanthomonas oryzae pv. oryzae (strain MAFF 311018).